Consider the following 717-residue polypeptide: Patatin-like phospholipase domain-containing protein AO090003000839 (717 aa).

A helical membrane pass occupies residues 87-107 (WPFLFIVFGWITVLGFAYALT). The 192-residue stretch at 277–468 (LCLSGGATFA…RTDIPIRALN (192 aa)) folds into the PNPLA domain. The GXSXG signature appears at 308–312 (GTSGG). Catalysis depends on S310, which acts as the Nucleophile. D455 functions as the Proton acceptor in the catalytic mechanism. Residues 620-696 (VSPAQSRRKR…STGNIFQEMR (77 aa)) form a disordered region. Positions 639-658 (MVERLDHNLPDRQPDNKEDL) are enriched in basic and acidic residues. Residues 660-673 (DSSGIDSNVSSRDS) show a composition bias toward low complexity.

This sequence belongs to the PLPL family.

The protein localises to the membrane. Probable lipid hydrolase. The chain is Patatin-like phospholipase domain-containing protein AO090003000839 from Aspergillus oryzae (strain ATCC 42149 / RIB 40) (Yellow koji mold).